The sequence spans 1333 residues: DNA-directed RNA polymerase subunit beta' (1333 aa).

The Zn(2+) site is built by Cys-60, Cys-62, Cys-75, and Cys-78. 3 residues coordinate Mg(2+): Asp-535, Asp-537, and Asp-539. Zn(2+) is bound by residues Cys-901, Cys-983, Cys-990, and Cys-993.

Belongs to the RNA polymerase beta' chain family. The RNAP catalytic core consists of 2 alpha, 1 beta, 1 beta' and 1 omega subunit. When a sigma factor is associated with the core the holoenzyme is formed, which can initiate transcription. Mg(2+) serves as cofactor. Requires Zn(2+) as cofactor.

The catalysed reaction is RNA(n) + a ribonucleoside 5'-triphosphate = RNA(n+1) + diphosphate. Functionally, DNA-dependent RNA polymerase catalyzes the transcription of DNA into RNA using the four ribonucleoside triphosphates as substrates. This chain is DNA-directed RNA polymerase subunit beta', found in Corynebacterium glutamicum (strain R).